A 603-amino-acid polypeptide reads, in one-letter code: Trihelix transcription factor DF1 (603 aa).

The region spanning 60–118 is the Myb-like 1 domain; sequence NRWPRQETLALLKIRSDMGIAFRDASVKGPLWEEVSRKMAEHGYIRNAKKCKEKFENVY. 4 disordered regions span residues 149–201, 220–249, 333–408, and 532–603; these read QSTT…SSIP, LSDNSTSSSSSYSTSSDMEMGGGTATTRKK, KQPN…SSSR, and QWPP…TNNL. Low complexity-rich tracts occupy residues 168 to 178, 189 to 198, 221 to 236, and 344 to 362; these read NNNNNNNNNNN, TTVMPTLPSS, SDNSTSSSSSYSTSSD, and PQQVRPSMQLNNNNQQQPP. Pro residues predominate over residues 363–376; the sequence is QRSPPPQPPAPLPQ. Over residues 381-408 the composition is skewed to polar residues; the sequence is VVSTLDTTKTDNGGDQNMTPAASASSSR. Residues 401–465 form the Myb-like 2 domain; sequence AASASSSRWP…RCKEKWENIN (65 aa). Residues 532–555 show a composition bias toward low complexity; it reads QWPPAVTTATTTPAAAQPDQQSQP. Residues 559-586 are compositionally biased toward acidic residues; that stretch reads NFDDEEGTDEEYDDEDEEEENEEEEGGE. Over residues 593–603 the composition is skewed to low complexity; sequence NNNNNKTTNNL.

It is found in the nucleus. Its function is as follows. Transcription repressor that negatively regulates root hair growth by directly binding RSL4 promoter and repressing RSL4 expression. Required for the synthesis of seed coat mucilage. The chain is Trihelix transcription factor DF1 from Arabidopsis thaliana (Mouse-ear cress).